The following is a 900-amino-acid chain: Phosphoenolpyruvate carboxylase (900 aa).

Residues His-140 and Lys-568 contribute to the active site.

Belongs to the PEPCase type 1 family. It depends on Mg(2+) as a cofactor.

The catalysed reaction is oxaloacetate + phosphate = phosphoenolpyruvate + hydrogencarbonate. Forms oxaloacetate, a four-carbon dicarboxylic acid source for the tricarboxylic acid cycle. The chain is Phosphoenolpyruvate carboxylase from Neisseria meningitidis serogroup A / serotype 4A (strain DSM 15465 / Z2491).